The following is a 102-amino-acid chain: Small ribosomal subunit protein uS10 (102 aa).

It belongs to the universal ribosomal protein uS10 family. As to quaternary structure, part of the 30S ribosomal subunit.

Involved in the binding of tRNA to the ribosomes. The protein is Small ribosomal subunit protein uS10 of Pediococcus pentosaceus (strain ATCC 25745 / CCUG 21536 / LMG 10740 / 183-1w).